Consider the following 101-residue polypeptide: MIPGELMPLDGEIELNAGRPTVTVTVANTGDRPVQVGSHFHFYETNAALSFDREAARGYRLDIAAGTAVRFEPGQSRTVQLVALDGDRIVYGFNGRIMGAL.

This sequence belongs to the urease beta subunit family. As to quaternary structure, heterotrimer of UreA (gamma), UreB (beta) and UreC (alpha) subunits. Three heterotrimers associate to form the active enzyme.

It is found in the cytoplasm. It catalyses the reaction urea + 2 H2O + H(+) = hydrogencarbonate + 2 NH4(+). It functions in the pathway nitrogen metabolism; urea degradation; CO(2) and NH(3) from urea (urease route): step 1/1. The polypeptide is Urease subunit beta (Cupriavidus metallidurans (strain ATCC 43123 / DSM 2839 / NBRC 102507 / CH34) (Ralstonia metallidurans)).